We begin with the raw amino-acid sequence, 198 residues long: Elongation factor Ts (198 aa).

Positions 82 to 85 are involved in Mg(2+) ion dislocation from EF-Tu; it reads SDFV.

It belongs to the EF-Ts family.

The protein resides in the cytoplasm. Associates with the EF-Tu.GDP complex and induces the exchange of GDP to GTP. It remains bound to the aminoacyl-tRNA.EF-Tu.GTP complex up to the GTP hydrolysis stage on the ribosome. The sequence is that of Elongation factor Ts from Desulfosudis oleivorans (strain DSM 6200 / JCM 39069 / Hxd3) (Desulfococcus oleovorans).